A 469-amino-acid chain; its full sequence is Carboxypeptidase Q (469 aa).

Residues 1 to 19 (MKTLILTLLSLYELQLCCG) form the signal peptide. Positions 20 to 42 (AYNQNIRSQRKFEMIKTEISSYK) are excised as a propeptide. 2 N-linked (GlcNAc...) asparagine glycosylation sites follow: Asn-59 and Asn-159. Residues His-288 and Asp-300 each coordinate Zn(2+). The Nucleophile role is filled by Glu-334. Glu-335 is a binding site for Zn(2+). A glycan (N-linked (GlcNAc...) asparagine) is linked at Asn-351. Position 362 (Asp-362) interacts with Zn(2+). The N-linked (GlcNAc...) asparagine glycan is linked to Asn-394. A Zn(2+)-binding site is contributed by His-432.

It belongs to the peptidase M28 family. As to quaternary structure, homodimer. The monomeric form is inactive while the homodimer is active.

Its subcellular location is the endoplasmic reticulum. It localises to the golgi apparatus. The protein localises to the lysosome. It is found in the secreted. Carboxypeptidase that may play an important role in the hydrolysis of circulating peptides. Catalyzes more efficiently the hydrolysis of dipeptides with unsubstituted terminals into amino acids. In Xenopus laevis (African clawed frog), this protein is Carboxypeptidase Q (cpq).